A 1055-amino-acid polypeptide reads, in one-letter code: Error-prone DNA polymerase (1055 aa).

Belongs to the DNA polymerase type-C family. DnaE2 subfamily.

The protein localises to the cytoplasm. The enzyme catalyses DNA(n) + a 2'-deoxyribonucleoside 5'-triphosphate = DNA(n+1) + diphosphate. In terms of biological role, DNA polymerase involved in damage-induced mutagenesis and translesion synthesis (TLS). It is not the major replicative DNA polymerase. In Corynebacterium glutamicum (strain ATCC 13032 / DSM 20300 / JCM 1318 / BCRC 11384 / CCUG 27702 / LMG 3730 / NBRC 12168 / NCIMB 10025 / NRRL B-2784 / 534), this protein is Error-prone DNA polymerase.